The primary structure comprises 58 residues: Large ribosomal subunit protein uL30 (58 aa).

The protein belongs to the universal ribosomal protein uL30 family. In terms of assembly, part of the 50S ribosomal subunit.

The sequence is that of Large ribosomal subunit protein uL30 from Pseudomonas aeruginosa (strain LESB58).